The following is a 60-amino-acid chain: MAQIKITLTKSPIGRKPEQRKTVVALGLGKLNSSVVKEDNPAILGMVNAISHLVTVEEVK.

This sequence belongs to the universal ribosomal protein uL30 family. Part of the 50S ribosomal subunit.

In Streptococcus suis (strain 98HAH33), this protein is Large ribosomal subunit protein uL30.